The chain runs to 333 residues: Receptor polysaccharide phosphotransferase WefC (333 aa).

It belongs to the stealth family.

Its function is as follows. Part of the type 2Gn receptor polysaccharide (RPS) biosynthesis locus. Essential for cell surface RPS production, and for synthesis of the host-like GalNAc beta 1-3Gal (Gn) motif of the RPS. Probably encodes a 1-3Gal alpha transferase. The sequence is that of Receptor polysaccharide phosphotransferase WefC (wefC) from Streptococcus gordonii.